A 900-amino-acid polypeptide reads, in one-letter code: Formin-like protein 5 (900 aa).

A helical; Signal-anchor transmembrane segment spans residues 15–32 (SRLVFWLILFSGLLVITL). Positions 136–209 (RNLATKPGSS…PVSPAKKKED (74 aa)) are disordered. Residues 160–173 (PPRPPTRPKSPPPR) show a composition bias toward pro residues. A helical membrane pass occupies residues 214–234 (IIIAVVVTAVSTFLLAALFFL). Disordered stretches follow at residues 273-440 (SVKG…DAPK) and 849-900 (ARGR…SDSD). Polar residues predominate over residues 281–304 (HQSFNIYSNQGKMSSFDGSNSDTS). Over residues 307-316 (LEERLSHEGL) the composition is skewed to basic and acidic residues. Residues 359 to 368 (FLKVSSKKAS) are compositionally biased toward low complexity. The span at 369–429 (APPPPVPAPQ…GPKAPRPPSG (61 aa)) shows a compositional bias: pro residues. Residues 433 to 865 (ALDDDAPKTK…MARKQGSTAS (433 aa)) enclose the FH2 domain. A compositionally biased stretch (polar residues) spans 860–876 (QGSTASASSETPRQTPS).

Belongs to the formin-like family. Class-I subfamily. In terms of tissue distribution, expressed in the endosperm. Localizes to the cell plate, a plant-specific membranous component that is assembled at the plane of cell division.

The protein resides in the membrane. Might be involved in the organization and polarity of the actin cytoskeleton. Interacts with the barbed end of actin filaments and nucleates actin-filament polymerization in vitro. Seems to play a role in cytokinesis. This Arabidopsis thaliana (Mouse-ear cress) protein is Formin-like protein 5 (FH5).